The following is a 275-amino-acid chain: NAD(P)H dehydrogenase [quinone] 1 (275 aa).

FAD-binding positions include histidine 13, 19 to 20, and glutamine 68; that span reads FN. A Phosphoserine modification is found at serine 83. 105–108 provides a ligand contact to FAD; that stretch reads LQWF. 127–129 serves as a coordination point for substrate; it reads AYT. Residues 149–152, tyrosine 157, and arginine 202 each bind FAD; that span reads TTGG. Residues 226–275 form an important for apoenzyme conformational stability region; sequence PSSLFDLNFQAGFLLKKEIEDEQKNNKYGLSVGHHLGKPIPTDNQIKARK. Lysine 252 participates in a covalent cross-link: Glycyl lysine isopeptide (Lys-Gly) (interchain with G-Cter in SUMO2).

This sequence belongs to the NAD(P)H dehydrogenase (quinone) family. In terms of assembly, homodimer. Interacts with PDLIM4 isoform 2; this interaction stabilizes PDLIM4 isoform 2 in response to oxidative stress and protects it from ubiquitin-independent degradation by the core 20S proteasome. Interacts with TP73 (via SAM domain); this interaction is NADH-dependent, stabilizes TP73 in response to oxidative stress and protects it from ubiquitin-independent degradation by the 20S proteasome. Interacts with TP53; this interaction is NADH-dependent, stabilizes TP53 in response to oxidative stress and protects it from ubiquitin-independent degradation by the 20S proteasome. FAD is required as a cofactor.

Its subcellular location is the cytoplasm. The protein localises to the cytosol. The enzyme catalyses a quinone + NADH + H(+) = a quinol + NAD(+). It carries out the reaction a quinone + NADPH + H(+) = a quinol + NADP(+). It catalyses the reaction ubiquinone-10 + NADH + H(+) = ubiquinol-10 + NAD(+). The catalysed reaction is menadione + NADH + H(+) = menadiol + NAD(+). Its function is as follows. Flavin-containing quinone reductase that catalyzes two-electron reduction of quinones to hydroquinones using either NADH or NADPH as electron donors. In a ping-pong kinetic mechanism, the electrons are sequentially transferred from NAD(P)H to flavin cofactor and then from reduced flavin to the quinone, bypassing the formation of semiquinone and reactive oxygen species. Regulates cellular redox state primarily through quinone detoxification. Reduces components of plasma membrane redox system such as coenzyme Q and vitamin quinones, producing antioxidant hydroquinone forms. In the process may function as superoxide scavenger to prevent hydroquinone oxidation and facilitate excretion. Alternatively, can activate quinones and their derivatives by generating redox reactive hydroquinones with DNA cross-linking antitumor potential. Acts as a gatekeeper of the core 20S proteasome known to degrade proteins with unstructured regions. Upon oxidative stress, interacts with tumor suppressors TP53 and TP73 in a NADH-dependent way and inhibits their ubiquitin-independent degradation by the 20S proteasome. The sequence is that of NAD(P)H dehydrogenase [quinone] 1 (NQO1) from Cavia porcellus (Guinea pig).